A 145-amino-acid polypeptide reads, in one-letter code: D-aminoacyl-tRNA deacylase (145 aa).

A Gly-cisPro motif, important for rejection of L-amino acids motif is present at residues 137-138; the sequence is GP.

It belongs to the DTD family. As to quaternary structure, homodimer.

The protein localises to the cytoplasm. It catalyses the reaction glycyl-tRNA(Ala) + H2O = tRNA(Ala) + glycine + H(+). It carries out the reaction a D-aminoacyl-tRNA + H2O = a tRNA + a D-alpha-amino acid + H(+). An aminoacyl-tRNA editing enzyme that deacylates mischarged D-aminoacyl-tRNAs. Also deacylates mischarged glycyl-tRNA(Ala), protecting cells against glycine mischarging by AlaRS. Acts via tRNA-based rather than protein-based catalysis; rejects L-amino acids rather than detecting D-amino acids in the active site. By recycling D-aminoacyl-tRNA to D-amino acids and free tRNA molecules, this enzyme counteracts the toxicity associated with the formation of D-aminoacyl-tRNA entities in vivo and helps enforce protein L-homochirality. In Citrobacter koseri (strain ATCC BAA-895 / CDC 4225-83 / SGSC4696), this protein is D-aminoacyl-tRNA deacylase.